The primary structure comprises 352 residues: Hematopoietic SH2 domain-containing protein (352 aa).

The 92-residue stretch at 34-125 (WFHGAISRED…PRRELLTQPC (92 aa)) folds into the SH2 domain. Disordered stretches follow at residues 157–199 (EEAS…LGET) and 241–352 (VISG…PGYC). Residues 180–191 (RITTKEATSSCP) show a composition bias toward polar residues. Over residues 283 to 295 (PKDRKVPTRKAER) the composition is skewed to basic and acidic residues. A compositionally biased stretch (pro residues) spans 343–352 (QPPPFAPGYC).

In terms of assembly, interacts with FES and TNK2. In terms of processing, may be phosphorylated by FES and ACK1. In terms of tissue distribution, predominantly expressed in spleen and hematopoietic cells such as peripheral blood leukocytes and weakly expressed in prostate, thymus, heart, small intestine and placenta.

The protein resides in the cytoplasm. Its subcellular location is the nucleus. May be a modulator of the apoptotic response through its ability to affect mitochondrial stability. Adapter protein involved in tyrosine kinase and CD28 signaling. Seems to affect CD28-mediated activation of the RE/AP element of the interleukin-2 promoter. The chain is Hematopoietic SH2 domain-containing protein (HSH2D) from Homo sapiens (Human).